The sequence spans 370 residues: Queuine tRNA-ribosyltransferase (370 aa).

The active-site Proton acceptor is the Asp-93. Substrate is bound by residues Asp-93–Phe-97, Asp-147, Gln-189, and Gly-216. The interval Gly-247 to Cys-253 is RNA binding. Asp-266 functions as the Nucleophile in the catalytic mechanism. An RNA binding; important for wobble base 34 recognition region spans residues Thr-271–Arg-275. Zn(2+) is bound by residues Cys-304, Cys-306, Cys-309, and His-335.

Belongs to the queuine tRNA-ribosyltransferase family. Homodimer. Within each dimer, one monomer is responsible for RNA recognition and catalysis, while the other monomer binds to the replacement base PreQ1. The cofactor is Zn(2+).

The enzyme catalyses 7-aminomethyl-7-carbaguanine + guanosine(34) in tRNA = 7-aminomethyl-7-carbaguanosine(34) in tRNA + guanine. The protein operates within tRNA modification; tRNA-queuosine biosynthesis. Catalyzes the base-exchange of a guanine (G) residue with the queuine precursor 7-aminomethyl-7-deazaguanine (PreQ1) at position 34 (anticodon wobble position) in tRNAs with GU(N) anticodons (tRNA-Asp, -Asn, -His and -Tyr). Catalysis occurs through a double-displacement mechanism. The nucleophile active site attacks the C1' of nucleotide 34 to detach the guanine base from the RNA, forming a covalent enzyme-RNA intermediate. The proton acceptor active site deprotonates the incoming PreQ1, allowing a nucleophilic attack on the C1' of the ribose to form the product. After dissociation, two additional enzymatic reactions on the tRNA convert PreQ1 to queuine (Q), resulting in the hypermodified nucleoside queuosine (7-(((4,5-cis-dihydroxy-2-cyclopenten-1-yl)amino)methyl)-7-deazaguanosine). The chain is Queuine tRNA-ribosyltransferase from Pelotomaculum thermopropionicum (strain DSM 13744 / JCM 10971 / SI).